The following is a 348-amino-acid chain: Probable dual-specificity RNA methyltransferase RlmN (348 aa).

E95 acts as the Proton acceptor in catalysis. In terms of domain architecture, Radical SAM core spans S101–D335. C108 and C340 are disulfide-bonded. 3 residues coordinate [4Fe-4S] cluster: C115, C119, and C122. S-adenosyl-L-methionine-binding positions include G162–E163, S192, S221–H223, and N297. C340 acts as the S-methylcysteine intermediate in catalysis.

It belongs to the radical SAM superfamily. RlmN family. It depends on [4Fe-4S] cluster as a cofactor.

It localises to the cytoplasm. The catalysed reaction is adenosine(2503) in 23S rRNA + 2 reduced [2Fe-2S]-[ferredoxin] + 2 S-adenosyl-L-methionine = 2-methyladenosine(2503) in 23S rRNA + 5'-deoxyadenosine + L-methionine + 2 oxidized [2Fe-2S]-[ferredoxin] + S-adenosyl-L-homocysteine. It carries out the reaction adenosine(37) in tRNA + 2 reduced [2Fe-2S]-[ferredoxin] + 2 S-adenosyl-L-methionine = 2-methyladenosine(37) in tRNA + 5'-deoxyadenosine + L-methionine + 2 oxidized [2Fe-2S]-[ferredoxin] + S-adenosyl-L-homocysteine. Its function is as follows. Specifically methylates position 2 of adenine 2503 in 23S rRNA and position 2 of adenine 37 in tRNAs. The sequence is that of Probable dual-specificity RNA methyltransferase RlmN from Prochlorococcus marinus (strain SARG / CCMP1375 / SS120).